The chain runs to 254 residues: NAD-dependent protein deacetylase 1 (254 aa).

The 250-residue stretch at 5–254 folds into the Deacetylase sirtuin-type domain; sequence ASDLRSGVER…GETLGPFVGN (250 aa). The NAD(+) site is built by A31, T35, F42, R43, Q108, I110, D111, and H128. A nicotinamide-binding site is contributed by F42. Nicotinamide-binding residues include I110 and D111. H128 serves as the catalytic Proton acceptor. Zn(2+)-binding residues include C136, C139, C160, and C163. The NAD(+) site is built by S201, S202, N226, D243, and I244.

This sequence belongs to the sirtuin family. Class U subfamily. Zn(2+) serves as cofactor.

Its subcellular location is the cytoplasm. The enzyme catalyses N(6)-acetyl-L-lysyl-[protein] + NAD(+) + H2O = 2''-O-acetyl-ADP-D-ribose + nicotinamide + L-lysyl-[protein]. Functionally, NAD-dependent protein deacetylase which modulates the activities of several enzymes which are inactive in their acetylated form. In Bradyrhizobium diazoefficiens (strain JCM 10833 / BCRC 13528 / IAM 13628 / NBRC 14792 / USDA 110), this protein is NAD-dependent protein deacetylase 1.